The chain runs to 447 residues: Sensor protein VanSB (447 aa).

2 consecutive transmembrane segments (helical) span residues Val10–Ala30 and Gly137–Phe155. One can recognise an HAMP domain in the interval Arg157 to Ala208. The region spanning Ala230–Ser445 is the Histidine kinase domain. His233 carries the post-translational modification Phosphohistidine; by autocatalysis.

It localises to the cell membrane. It carries out the reaction ATP + protein L-histidine = ADP + protein N-phospho-L-histidine.. Its function is as follows. Member of the two-component regulatory system VanSB/VanRB. Activates the transcription of vanSB, vanYB and vanW in response to vancomycin which results in vancomycin resistance. VanSB may activate VanRB by phosphorylation. May also act as a phospho-VanRB phosphatase. This is Sensor protein VanSB (vanSB) from Enterococcus faecalis (strain ATCC 700802 / V583).